The chain runs to 261 residues: MAHQAHPYHMVDPSPWPLTGATAALLMTSGLAIWFHFHSLLLLYLGLTLLLLTMIQWWRDIIREGTFQGHHTPPVQKGLRYGMILFIVSEVFFFLGFFWAFYHSSLAPTPELGGCWPPTGINPLDPFEVPLLNTAVLLASGVTVTWAHHGLMEGNRKEAIQALTLTIILGVYFTALQAMEYYEAPFTIADGVYGTTFFVATGFHGLHVIIGSTFLAVCLLRQVLYHFTSEHHFGFEAAAWYWHFVDVVWLFLYVSIYWWGS.

The Mitochondrial matrix segment spans residues 1-15 (MAHQAHPYHMVDPSP). A helical membrane pass occupies residues 16-34 (WPLTGATAALLMTSGLAIW). Residues 35 to 40 (FHFHSL) lie on the Mitochondrial intermembrane side of the membrane. A helical transmembrane segment spans residues 41-66 (LLLYLGLTLLLLTMIQWWRDIIREGT). Over 67-72 (FQGHHT) the chain is Mitochondrial matrix. Residues 73 to 105 (PPVQKGLRYGMILFIVSEVFFFLGFFWAFYHSS) traverse the membrane as a helical segment. Topologically, residues 106–128 (LAPTPELGGCWPPTGINPLDPFE) are mitochondrial intermembrane. Residues 129–152 (VPLLNTAVLLASGVTVTWAHHGLM) traverse the membrane as a helical segment. Residues 153-155 (EGN) are Mitochondrial matrix-facing. The helical transmembrane segment at 156-183 (RKEAIQALTLTIILGVYFTALQAMEYYE) threads the bilayer. Residues 184 to 190 (APFTIAD) are Mitochondrial intermembrane-facing. The chain crosses the membrane as a helical span at residues 191-223 (GVYGTTFFVATGFHGLHVIIGSTFLAVCLLRQV). Topologically, residues 224-232 (LYHFTSEHH) are mitochondrial matrix. Residues 233–256 (FGFEAAAWYWHFVDVVWLFLYVSI) traverse the membrane as a helical segment. The Mitochondrial intermembrane segment spans residues 257–261 (YWWGS).

Belongs to the cytochrome c oxidase subunit 3 family. Component of the cytochrome c oxidase (complex IV, CIV), a multisubunit enzyme composed of 14 subunits. The complex is composed of a catalytic core of 3 subunits MT-CO1, MT-CO2 and MT-CO3, encoded in the mitochondrial DNA, and 11 supernumerary subunits COX4I, COX5A, COX5B, COX6A, COX6B, COX6C, COX7A, COX7B, COX7C, COX8 and NDUFA4, which are encoded in the nuclear genome. The complex exists as a monomer or a dimer and forms supercomplexes (SCs) in the inner mitochondrial membrane with NADH-ubiquinone oxidoreductase (complex I, CI) and ubiquinol-cytochrome c oxidoreductase (cytochrome b-c1 complex, complex III, CIII), resulting in different assemblies (supercomplex SCI(1)III(2)IV(1) and megacomplex MCI(2)III(2)IV(2)).

It is found in the mitochondrion inner membrane. The enzyme catalyses 4 Fe(II)-[cytochrome c] + O2 + 8 H(+)(in) = 4 Fe(III)-[cytochrome c] + 2 H2O + 4 H(+)(out). Component of the cytochrome c oxidase, the last enzyme in the mitochondrial electron transport chain which drives oxidative phosphorylation. The respiratory chain contains 3 multisubunit complexes succinate dehydrogenase (complex II, CII), ubiquinol-cytochrome c oxidoreductase (cytochrome b-c1 complex, complex III, CIII) and cytochrome c oxidase (complex IV, CIV), that cooperate to transfer electrons derived from NADH and succinate to molecular oxygen, creating an electrochemical gradient over the inner membrane that drives transmembrane transport and the ATP synthase. Cytochrome c oxidase is the component of the respiratory chain that catalyzes the reduction of oxygen to water. Electrons originating from reduced cytochrome c in the intermembrane space (IMS) are transferred via the dinuclear copper A center (CU(A)) of subunit 2 and heme A of subunit 1 to the active site in subunit 1, a binuclear center (BNC) formed by heme A3 and copper B (CU(B)). The BNC reduces molecular oxygen to 2 water molecules using 4 electrons from cytochrome c in the IMS and 4 protons from the mitochondrial matrix. The polypeptide is Cytochrome c oxidase subunit 3 (MT-CO3) (Scyliorhinus canicula (Small-spotted catshark)).